The chain runs to 476 residues: Eukaryotic translation initiation factor 3 subunit L (476 aa).

The 196-residue stretch at 257 to 452 (DAIRMFSHIL…DLDYALENDL (196 aa)) folds into the PCI domain.

Belongs to the eIF-3 subunit L family. As to quaternary structure, component of the eukaryotic translation initiation factor 3 (eIF-3) complex.

The protein localises to the cytoplasm. Functionally, component of the eukaryotic translation initiation factor 3 (eIF-3) complex, which is involved in protein synthesis of a specialized repertoire of mRNAs and, together with other initiation factors, stimulates binding of mRNA and methionyl-tRNAi to the 40S ribosome. The eIF-3 complex specifically targets and initiates translation of a subset of mRNAs involved in cell proliferation. The sequence is that of Eukaryotic translation initiation factor 3 subunit L from Aspergillus oryzae (strain ATCC 42149 / RIB 40) (Yellow koji mold).